The chain runs to 197 residues: Glycerol-3-phosphate acyltransferase (197 aa).

The next 5 helical transmembrane spans lie at 1 to 21 (MNIL…GFLI), 78 to 98 (LIEV…IWLG), 111 to 131 (MFLA…LIVL), 136 to 155 (FVSL…MFFY), and 159 to 176 (FIHT…LVIW).

It belongs to the PlsY family. Probably interacts with PlsX.

It is found in the cell inner membrane. The enzyme catalyses an acyl phosphate + sn-glycerol 3-phosphate = a 1-acyl-sn-glycero-3-phosphate + phosphate. It functions in the pathway lipid metabolism; phospholipid metabolism. Functionally, catalyzes the transfer of an acyl group from acyl-phosphate (acyl-PO(4)) to glycerol-3-phosphate (G3P) to form lysophosphatidic acid (LPA). This enzyme utilizes acyl-phosphate as fatty acyl donor, but not acyl-CoA or acyl-ACP. This Prochlorococcus marinus (strain MIT 9215) protein is Glycerol-3-phosphate acyltransferase.